We begin with the raw amino-acid sequence, 156 residues long: MMVLDKEDGVPMLSVQPKGKQKGCAGCNRKIKDRYLLKALDKYWHEDCLKCACCDCRLGEVGSTLYTKANLILCRRDYLRLFGTTGNCAACSKLIPAFEMVMRARDNVYHLDCFACQLCNQRFCVGDKFFLKNNMILCQMDYEEGQLNGTFESQVQ.

LIM zinc-binding domains lie at 24-83 and 88-147; these read CAGC…RLFG and CAAC…EGQL.

In terms of tissue distribution, expressed mainly in the central nervous. Low level of expression in other tissues including thymus.

Its subcellular location is the nucleus. Functionally, may be involved in gene regulation within neural lineage cells potentially by direct DNA binding or by binding to other transcription factors. This is Rhombotin-1 (LMO1) from Homo sapiens (Human).